The chain runs to 344 residues: uncharacterized protein (344 aa).

The first 20 residues, 1–20, serve as a signal peptide directing secretion; that stretch reads MEIRIMLFILMMMVMPVSYA.

This sequence belongs to the fimbrial protein family.

Part of the yehABCD fimbrial operon. Could contribute to adhesion to various surfaces in specific environmental niches. This is an uncharacterized protein from Escherichia coli (strain K12).